The following is a 147-amino-acid chain: Hemoglobin subunit beta-1/2 (147 aa).

At Val2 the chain carries N-acetylvaline. In terms of domain architecture, Globin spans 3–147 (HLSSEEKSAV…VANALAHKYH (145 aa)). Position 13 is a phosphothreonine (Thr13). At Ser45 the chain carries Phosphoserine. Residue Lys60 is modified to N6-acetyllysine. His64 is a heme b binding site. The residue at position 83 (Lys83) is an N6-acetyllysine. His93 is a heme b binding site. An S-nitrosocysteine modification is found at Cys94. Lys145 is subject to N6-acetyllysine.

Belongs to the globin family. As to quaternary structure, heterotetramer of two alpha chains and two beta chains. As to expression, red blood cells.

In terms of biological role, involved in oxygen transport from the lung to the various peripheral tissues. This chain is Hemoglobin subunit beta-1/2 (HBB1), found in Oryctolagus cuniculus (Rabbit).